The following is a 54-amino-acid chain: Large ribosomal subunit protein bL33A (54 aa).

Belongs to the bacterial ribosomal protein bL33 family.

The protein is Large ribosomal subunit protein bL33A of Streptomyces griseus subsp. griseus (strain JCM 4626 / CBS 651.72 / NBRC 13350 / KCC S-0626 / ISP 5235).